A 702-amino-acid chain; its full sequence is Ribosomal RNA large subunit methyltransferase K/L (702 aa).

Residues 43-154 (LVYQSLMWSR…KETASIALDL (112 aa)) enclose the THUMP domain.

It belongs to the methyltransferase superfamily. RlmKL family.

The protein localises to the cytoplasm. The catalysed reaction is guanosine(2445) in 23S rRNA + S-adenosyl-L-methionine = N(2)-methylguanosine(2445) in 23S rRNA + S-adenosyl-L-homocysteine + H(+). The enzyme catalyses guanosine(2069) in 23S rRNA + S-adenosyl-L-methionine = N(2)-methylguanosine(2069) in 23S rRNA + S-adenosyl-L-homocysteine + H(+). Its function is as follows. Specifically methylates the guanine in position 2445 (m2G2445) and the guanine in position 2069 (m7G2069) of 23S rRNA. The protein is Ribosomal RNA large subunit methyltransferase K/L of Escherichia coli O139:H28 (strain E24377A / ETEC).